Here is a 435-residue protein sequence, read N- to C-terminus: Cyclin-dependent kinase 15 (435 aa).

The 285-residue stretch at 103-387 folds into the Protein kinase domain; sequence YLNLEKLGEG…AQEALVHDYF (285 aa). Residues 109 to 117 and K132 each bind ATP; that span reads LGEGSYATV. D224 functions as the Proton acceptor in the catalytic mechanism.

Belongs to the protein kinase superfamily. CMGC Ser/Thr protein kinase family. CDC2/CDKX subfamily. The cofactor is Mg(2+).

The enzyme catalyses L-seryl-[protein] + ATP = O-phospho-L-seryl-[protein] + ADP + H(+). It carries out the reaction L-threonyl-[protein] + ATP = O-phospho-L-threonyl-[protein] + ADP + H(+). In terms of biological role, serine/threonine-protein kinase that acts like an antiapoptotic protein that counters TRAIL/TNFSF10-induced apoptosis by inducing phosphorylation of BIRC5 at 'Thr-34'. This chain is Cyclin-dependent kinase 15 (CDK15), found in Homo sapiens (Human).